The primary structure comprises 503 residues: Inosine-5'-monophosphate dehydrogenase (503 aa).

Residues Gly-20 and Ser-22 each coordinate K(+). 2 CBS domains span residues 103-163 and 167-228; these read FVVS…ETKV and MTPF…LVDS. 261–263 contacts NAD(+); that stretch reads DSS. The K(+) site is built by Asp-264, Phe-266, Gly-314, and Gly-316. NAD(+) is bound at residue 312 to 314; that stretch reads GIG. An IMP-binding site is contributed by Ser-317. Cys-319 lines the K(+) pocket. The Thioimidate intermediate role is filled by Cys-319. IMP contacts are provided by residues 358–360, 381–382, and 405–409; these read DGG, GR, and YWGEG. Arg-418 serves as the catalytic Proton acceptor. Glu-431 contacts IMP. K(+) is bound by residues Asn-460, Glu-485, Gly-486, and Gly-487.

It belongs to the IMPDH/GMPR family. Homotetramer. The cofactor is K(+).

The protein resides in the cytoplasm. It catalyses the reaction IMP + NAD(+) + H2O = XMP + NADH + H(+). It functions in the pathway purine metabolism; XMP biosynthesis via de novo pathway; XMP from IMP: step 1/1. Mycophenolic acid (MPA) is a non-competitive inhibitor that prevents formation of the closed enzyme conformation by binding to the same site as the amobile flap. In contrast, mizoribine monophosphate (MZP) is a competitive inhibitor that induces the closed conformation. MPA is a potent inhibitor of mammalian IMPDHs but a poor inhibitor of the bacterial enzymes. MZP is a more potent inhibitor of bacterial IMPDH. Its function is as follows. Catalyzes the conversion of inosine 5'-phosphate (IMP) to xanthosine 5'-phosphate (XMP), the first committed and rate-limiting step in the de novo synthesis of guanine nucleotides, and therefore plays an important role in the regulation of cell growth. Could also have a single-stranded nucleic acid-binding activity and could play a role in RNA and/or DNA metabolism. The sequence is that of Inosine-5'-monophosphate dehydrogenase from Tritrichomonas foetus (Trichomonas foetus).